A 905-amino-acid chain; its full sequence is Toll-like receptor 3 (905 aa).

The N-terminal stretch at 1–25 is a signal peptide; it reads MKGCSSYLMYSFGGLLSLWILLVSS. Residues 26-52 form the LRRNT domain; it reads TNQCTVRYNVADCSHLKLTHIPDDLPS. Topologically, residues 26–705 are lumenal; sequence TNQCTVRYNV…SCKDSAPFEL (680 aa). Cysteine 29 and cysteine 38 form a disulfide bridge. 3 N-linked (GlcNAc...) asparagine glycosylation sites follow: asparagine 53, asparagine 58, and asparagine 71. LRR repeat units lie at residues 53–74, 77–98, 101–122, 125–146, 149–170, and 173–196; these read NITV…NFTR, QLAI…LCQI, LLKV…TFVF, NLTE…PFKN, NLIK…TGVQ, and NLQE…EFLG. An intrachain disulfide couples cysteine 96 to cysteine 123. Asparagine 125 carries an N-linked (GlcNAc...) asparagine glycan. N-linked (GlcNAc...) asparagine glycosylation occurs at asparagine 197. One copy of the LRR 7 repeat lies at 199–220; it reads SLRKLDLSSNPLKEFSPGCFQT. N-linked (GlcNAc...) asparagine glycans are attached at residues asparagine 248, asparagine 253, asparagine 276, and asparagine 292. 15 LRR repeats span residues 250–271, 276–297, 300–321, 324–345, 357–378, 381–401, 409–430, 433–454, 458–479, 482–502, 508–529, 532–553, 564–585, 588–609, and 612–633; these read SIQN…TFSG, NLTQ…SFSY, SLRY…SFYG, NLRY…ASHP, YLEY…TFTG, SLKY…TNET, PLLT…TFSW, QLRI…QEWR, NIFE…SFAL, SLQR…SPSP, NLTI…LLEG, NLEI…ANPG, HLHI…VFKN, ELKS…IFDD, and SLRS…VFGP. 3 N-linked (GlcNAc...) asparagine glycosylation sites follow: asparagine 399, asparagine 414, and asparagine 425. Residue asparagine 508 is glycosylated (N-linked (GlcNAc...) asparagine). Residues 646-699 enclose the LRRCT domain; sequence NPFDCTCESISWFVNWINQTHTNISELSTHYLCNTPHHYYGFPLKLFDTSSCKD. 2 cysteine pairs are disulfide-bonded: cysteine 650–cysteine 678 and cysteine 652–cysteine 697. 2 N-linked (GlcNAc...) asparagine glycosylation sites follow: asparagine 663 and asparagine 668. The chain crosses the membrane as a helical span at residues 706–726; the sequence is LFIISTSMLLVFILVVLLIHI. Over 727–905 the chain is Cytoplasmic; the sequence is EGWRISFYWN…VALGSRNSAH (179 aa). One can recognise a TIR domain in the interval 755-898; it reads FEYTAYIIHA…AFHHKLQVAL (144 aa). Tyrosine 760 bears the Phosphotyrosine mark. Residues lysine 766, lysine 813, and lysine 832 each participate in a glycyl lysine isopeptide (Lys-Gly) (interchain with G-Cter in ubiquitin) cross-link. Residue tyrosine 859 is modified to Phosphotyrosine.

The protein belongs to the Toll-like receptor family. Monomer and homodimer; dimerization is triggered by ligand-binding, the signaling unit is composed of one ds-RNA of around 40 bp and two TLR3 molecules, and lateral clustering of signaling units along the length of the ds-RNA ligand is required for TLR3 signal transduction. Interacts (via transmembrane domain) with UNC93B1; the interaction is required for transport from the ER to the endosomes. Interacts with SRC; upon binding of double-stranded RNA. Interacts with TICAM1 (via the TIR domain) in response to poly(I:C) and this interaction is enhanced in the presence of WDFY1. The tyrosine-phosphorylated form (via TIR domain) interacts with WDFY1 (via WD repeat 2) in response to poly(I:C). Ubiquitinated by RNF170 at Lys-766 via 'Lys-48'-linked ubiquitin chains; leading to TLR3 proteasomal degradation. Post-translationally, TLR3 signaling requires a proteolytic cleavage mediated by cathepsins CTSB and CTSH, the cleavage occurs between amino acids 252 and 346. The cleaved form of TLR3 is the predominant form found in endosomes. Ubiquitinated by TRIM3; leading to recognition and sorting of polyubiquitinated TLR3 by the ESCRT complexes. Ubiquitinated by ZNRF1 via 'Lys-63'-linked ubiquitin chains; leading to TLR3 lysosomal trafficking and degradation. In terms of tissue distribution, highly expressed in lung. After intraperitoneal injection of lipopolysaccharide, highly expressed in brain, heart, kidney, liver, lung and spleen.

Its subcellular location is the endoplasmic reticulum membrane. The protein resides in the endosome membrane. The protein localises to the early endosome. Its function is as follows. Key component of innate and adaptive immunity. TLRs (Toll-like receptors) control host immune response against pathogens through recognition of molecular patterns specific to microorganisms. TLR3 is a nucleotide-sensing TLR which is activated by double-stranded RNA, a sign of viral infection. Acts via the adapter TRIF/TICAM1, leading to NF-kappa-B activation, IRF3 nuclear translocation, cytokine secretion and the inflammatory response. The polypeptide is Toll-like receptor 3 (Mus musculus (Mouse)).